A 454-amino-acid chain; its full sequence is Jacalin-related lectin 37 (454 aa).

In terms of domain architecture, Jacalin-type lectin spans Ser-295–Pro-438.

This sequence belongs to the jacalin lectin family.

The polypeptide is Jacalin-related lectin 37 (JAL37) (Arabidopsis thaliana (Mouse-ear cress)).